Reading from the N-terminus, the 270-residue chain is Mediator of RNA polymerase II transcription subunit 4 (270 aa).

Positions 1–22 (MAASSSGEKEKERLGGGLGVAG) are disordered. At A2 the chain carries N-acetylalanine. Coiled coils occupy residues 24–48 (NSTR…IEML) and 90–131 (HHEM…AKEK). Position 32 is a phosphoserine (S32). The disordered stretch occupies residues 226–270 (DMSMNMLPPNHSSDFLLEPPGHNKENEDDVEIMSTDSSSSSSESD). Over residues 259–270 (STDSSSSSSESD) the composition is skewed to low complexity.

This sequence belongs to the Mediator complex subunit 4 family. In terms of assembly, component of the Mediator complex, which is composed of MED1, MED4, MED6, MED7, MED8, MED9, MED10, MED11, MED12, MED13, MED13L, MED14, MED15, MED16, MED17, MED18, MED19, MED20, MED21, MED22, MED23, MED24, MED25, MED26, MED27, MED29, MED30, MED31, CCNC, CDK8 and CDC2L6/CDK11. The MED12, MED13, CCNC and CDK8 subunits form a distinct module termed the CDK8 module. Mediator containing the CDK8 module is less active than Mediator lacking this module in supporting transcriptional activation. Individual preparations of the Mediator complex lacking one or more distinct subunits have been variously termed ARC, CRSP, DRIP, PC2, SMCC and TRAP.

Its subcellular location is the nucleus. In terms of biological role, component of the Mediator complex, a coactivator involved in the regulated transcription of nearly all RNA polymerase II-dependent genes. Mediator functions as a bridge to convey information from gene-specific regulatory proteins to the basal RNA polymerase II transcription machinery. Mediator is recruited to promoters by direct interactions with regulatory proteins and serves as a scaffold for the assembly of a functional preinitiation complex with RNA polymerase II and the general transcription factors. This chain is Mediator of RNA polymerase II transcription subunit 4 (MED4), found in Homo sapiens (Human).